A 364-amino-acid chain; its full sequence is Ferrochelatase (364 aa).

Positions 210 and 291 each coordinate Fe cation.

The protein belongs to the ferrochelatase family.

The protein localises to the cytoplasm. The enzyme catalyses heme b + 2 H(+) = protoporphyrin IX + Fe(2+). It participates in porphyrin-containing compound metabolism; protoheme biosynthesis; protoheme from protoporphyrin-IX: step 1/1. Its function is as follows. Catalyzes the ferrous insertion into protoporphyrin IX. This Idiomarina loihiensis (strain ATCC BAA-735 / DSM 15497 / L2-TR) protein is Ferrochelatase.